The primary structure comprises 283 residues: Bifunctional protein FolD (283 aa).

166-168 (GAS) provides a ligand contact to NADP(+).

It belongs to the tetrahydrofolate dehydrogenase/cyclohydrolase family. In terms of assembly, homodimer.

The catalysed reaction is (6R)-5,10-methylene-5,6,7,8-tetrahydrofolate + NADP(+) = (6R)-5,10-methenyltetrahydrofolate + NADPH. The enzyme catalyses (6R)-5,10-methenyltetrahydrofolate + H2O = (6R)-10-formyltetrahydrofolate + H(+). Its pathway is one-carbon metabolism; tetrahydrofolate interconversion. Catalyzes the oxidation of 5,10-methylenetetrahydrofolate to 5,10-methenyltetrahydrofolate and then the hydrolysis of 5,10-methenyltetrahydrofolate to 10-formyltetrahydrofolate. The protein is Bifunctional protein FolD of Coxiella burnetii (strain CbuG_Q212) (Coxiella burnetii (strain Q212)).